We begin with the raw amino-acid sequence, 957 residues long: ADAMTS-like protein 2 (957 aa).

Positions 1–29 (MDGRRQHPHWAWSLLAVAVVAGGAAPTEA) are cleaved as a signal peptide. The TSP type-1 1 domain occupies 47–106 (AYWWGEWTKWTACSRSCGGGVTSQERHCLQQRRKSVPGTGNRTCVGTSKRYQLCRVQECP). 3 disulfides stabilise this stretch: Cys-59/Cys-100, Cys-63/Cys-105, and Cys-74/Cys-90. Residues Asn-87, Asn-374, Asn-435, Asn-482, Asn-518, Asn-530, Asn-539, and Asn-550 are each glycosylated (N-linked (GlcNAc...) asparagine). Positions 532 to 544 (SSEAPFPNTSASP) are enriched in polar residues. Residues 532–568 (SSEAPFPNTSASPPNLAGNRTHKARTRPKARKQGVSP) are disordered. Basic residues predominate over residues 551-563 (RTHKARTRPKARK). TSP type-1 domains follow at residues 570–624 (DMYR…EFCA), 628–692 (CQPR…PACG), 694–742 (QWEM…TGPP), 743–801 (CDRQ…KNCP), 803–857 (HWLA…TCFE), and 859–914 (PCFK…QPCP). An N-linked (GlcNAc...) asparagine glycan is attached at Asn-737. Asn-813 carries an N-linked (GlcNAc...) asparagine glycan. The 39-residue stretch at 918-956 (PDDSCQDQPGTNCALAIKVNLCGHWYYSKACCRSCRPPH) folds into the PLAC domain.

As to quaternary structure, interacts with LTBP1. Glycosylated. Can be O-fucosylated by POFUT2 on a serine or a threonine residue found within the consensus sequence C1-X(2)-(S/T)-C2-G of the TSP type-1 repeat domains where C1 and C2 are the first and second cysteine residue of the repeat, respectively. Fucosylated repeats can then be further glycosylated by the addition of a beta-1,3-glucose residue by the glucosyltransferase, B3GALTL. Fucosylation mediates the efficient secretion of ADAMTS family members. Can also be C-glycosylated with one or two mannose molecules on tryptophan residues within the consensus sequence W-X-X-W of the TPRs, and N-glycosylated. These other glycosylations can also facilitate secretion.

Its subcellular location is the secreted. This chain is ADAMTS-like protein 2 (Adamtsl2), found in Mus musculus (Mouse).